Here is a 310-residue protein sequence, read N- to C-terminus: Vomeronasal type-1 receptor 97 (310 aa).

At 1-19 (MNKDNILHTDTNIKITLFS) the chain is on the extracellular side. Residues 20 to 40 (EVSIGISANSALFFSHLFMLF) form a helical membrane-spanning segment. The Cytoplasmic segment spans residues 41–49 (EKNRSKPID). The chain crosses the membrane as a helical span at residues 50–70 (LYIAFLSLTQLMLLITIGLIA). Residues 71–93 (ADMFMSRGRWDSTTCQSLIYLHR) are Extracellular-facing. Cys-85 and Cys-172 form a disulfide bridge. The chain crosses the membrane as a helical span at residues 94–114 (LLRGFTLCATCLLNVLWTITL). The Cytoplasmic portion of the chain corresponds to 115–131 (SPRSSCLTTFKHKSPHH). The helical transmembrane segment at 132-152 (ISGAFLFFCVLYISFGSHLFL) threads the bilayer. At 153–190 (STIATPNLTSDNFMYVTQSCSFLPMSYSRTSMFSTPMA) the chain is on the extracellular side. Asn-159 carries N-linked (GlcNAc...) asparagine glycosylation. A helical membrane pass occupies residues 191–211 (IREALLIGLIGLSSGYMVAFL). Residues 212 to 238 (WRHKNQARHLHSTSLSSKVSPEQRATR) lie on the Cytoplasmic side of the membrane. Residues 239 to 259 (TIMILMSFFVVLYILENVVFY) form a helical membrane-spanning segment. Residues 260–269 (SRMTFKDGSM) lie on the Extracellular side of the membrane. Residues 270–290 (FYCVQIIVSHSYATISPFVFI) form a helical membrane-spanning segment. Over 291–310 (CTEKRIIKLWGSMSSRIVSI) the chain is Cytoplasmic.

This sequence belongs to the G-protein coupled receptor 1 family. Expressed in 1-4% of neurons of the vomeronasal organ. Only one pheromone receptor gene may be expressed in a particular neuron. Not expressed in the main olfactory epithelium.

It is found in the cell membrane. Its function is as follows. Putative pheromone receptor implicated in the regulation of social as well as reproductive behavior. The chain is Vomeronasal type-1 receptor 97 (Vom1r97) from Rattus norvegicus (Rat).